A 760-amino-acid chain; its full sequence is MRYNQFSYIPTSLERAAEELKELGFDLDLQKTAKANLESFLRKLFFHYPDSDYPLSHLIAKNDMDALSFFQSEQELSKEVFDLLALQVLGFIPGVDFTEADAFLDKLAFPIHFDETEIIKHIHHLLATRCKSGMTLIDDLVSQGMLTMDNDYHFFNGKSLATFDTSQLIREVVYVEAPLDTDQDGQLDLIKVNIIRPQSQKPLPTLMTPSPYHQGINEVANDKKLYRMEKELVVKKRRQITVEDRDFIPLETQPCKLPIGQNLESFSYINSYSLNDYFLARGFANIYVSGVGTAGSTGFMTSGDYAQIESFKAVIDWLNGRATAYTSHSKTHQVRADWANGLVCTTGKSYLGTMSTGLATTGVDGLAMIIAESAISSWYNYYRENGLVCSPGGYPGEDLDVLTELTYSRNLLAGDYLRHNDRYQELLNQQSQALDRQSGDYNQFWHDRNYLKNAHQIKCDVVYTHGLQDWNVKPRQVYEIFNALPSTINKHLFLHQGEHVYMHNRQSIDFRESMNALLCQKLLGLANDFSLPEMIWQDNTCPQNWQERKVFGTSTIKELDLGQELLLIDNHYGEDEFKAYGKDFRAFKAALFEGKANQALVDILLEEDLPINGEIVLQLKVKSSENKGLLSAQILDYGKKKRLGDLPIALTQSSIDNGQNFSRESLKELPFREDSYRVISKGFMNLQNRNNLSSIETIPNNKWMTVRLPLQPTIYHLEKGDTLRVILYTTDFEHTVRDNSNYALTIDLSQSQLIVPIASN.

Residues Ser349, Asp469, and His499 each act as charge relay system in the active site.

It belongs to the peptidase S15 family. Homodimer.

It localises to the cytoplasm. The enzyme catalyses Hydrolyzes Xaa-Pro-|- bonds to release unblocked, N-terminal dipeptides from substrates including Ala-Pro-|-p-nitroanilide and (sequentially) Tyr-Pro-|-Phe-Pro-|-Gly-Pro-|-Ile.. Removes N-terminal dipeptides sequentially from polypeptides having unsubstituted N-termini provided that the penultimate residue is proline. This is Xaa-Pro dipeptidyl-peptidase from Streptococcus pyogenes serotype M4 (strain MGAS10750).